Reading from the N-terminus, the 397-residue chain is Exodeoxyribonuclease 7 large subunit (397 aa).

Belongs to the XseA family. As to quaternary structure, heterooligomer composed of large and small subunits.

The protein localises to the cytoplasm. It carries out the reaction Exonucleolytic cleavage in either 5'- to 3'- or 3'- to 5'-direction to yield nucleoside 5'-phosphates.. Its function is as follows. Bidirectionally degrades single-stranded DNA into large acid-insoluble oligonucleotides, which are then degraded further into small acid-soluble oligonucleotides. The protein is Exodeoxyribonuclease 7 large subunit of Anaplasma marginale (strain Florida).